The chain runs to 80 residues: uncharacterized protein (80 aa).

To B.cereus similar ORF in glnR 5'region.

This is an uncharacterized protein from Bacillus cereus.